The following is a 445-amino-acid chain: Trigger factor (445 aa).

In terms of domain architecture, PPIase FKBP-type spans 164–249; it reads GDQVTFDFEG…VKKVEEAKLP (86 aa).

This sequence belongs to the FKBP-type PPIase family. Tig subfamily.

The protein localises to the cytoplasm. It carries out the reaction [protein]-peptidylproline (omega=180) = [protein]-peptidylproline (omega=0). Functionally, involved in protein export. Acts as a chaperone by maintaining the newly synthesized protein in an open conformation. Functions as a peptidyl-prolyl cis-trans isomerase. The chain is Trigger factor from Psychrobacter sp. (strain PRwf-1).